A 152-amino-acid polypeptide reads, in one-letter code: Transcriptional repressor NrdR (152 aa).

Residues 3–34 (CPFCHNEQSRVIDSRVIDSGTSIRRRRECAAC) fold into a zinc finger. Residues 46–136 (LSVVKRNGLA…VYKSFESADD (91 aa)) enclose the ATP-cone domain.

It belongs to the NrdR family. Zn(2+) is required as a cofactor.

Functionally, negatively regulates transcription of bacterial ribonucleotide reductase nrd genes and operons by binding to NrdR-boxes. The sequence is that of Transcriptional repressor NrdR from Corynebacterium aurimucosum (strain ATCC 700975 / DSM 44827 / CIP 107346 / CN-1) (Corynebacterium nigricans).